A 528-amino-acid polypeptide reads, in one-letter code: Membrane protein insertase YidC (528 aa).

5 helical membrane passes run 13-33 (ILLA…FFIP), 336-356 (WGWA…PLTY), 406-426 (LPIL…LNAI), 446-466 (YFIL…ITPM), and 481-501 (PVIF…YWFV).

It belongs to the OXA1/ALB3/YidC family. Type 1 subfamily. Interacts with the Sec translocase complex via SecD. Specifically interacts with transmembrane segments of nascent integral membrane proteins during membrane integration.

The protein resides in the cell inner membrane. Its function is as follows. Required for the insertion and/or proper folding and/or complex formation of integral membrane proteins into the membrane. Involved in integration of membrane proteins that insert both dependently and independently of the Sec translocase complex, as well as at least some lipoproteins. Aids folding of multispanning membrane proteins. The polypeptide is Membrane protein insertase YidC (Campylobacter jejuni subsp. jejuni serotype O:2 (strain ATCC 700819 / NCTC 11168)).